Consider the following 102-residue polypeptide: RNA-binding protein Hfq (102 aa).

In terms of domain architecture, Sm spans 9–68 (DPFLNALRRERVPVSIYLVNGIKLQGQIESFDQFVILLKNTVSQMVYKHAISTVVPSRPV). The disordered stretch occupies residues 63–102 (VPSRPVSHHSNNAGGGASNNYHHGSNAQGSTAQQDSEETE). Positions 70–88 (HHSNNAGGGASNNYHHGSN) are enriched in low complexity.

Belongs to the Hfq family. In terms of assembly, homohexamer.

Its function is as follows. RNA chaperone that binds small regulatory RNA (sRNAs) and mRNAs to facilitate mRNA translational regulation in response to envelope stress, environmental stress and changes in metabolite concentrations. Also binds with high specificity to tRNAs. This chain is RNA-binding protein Hfq, found in Salmonella agona (strain SL483).